Reading from the N-terminus, the 640-residue chain is UvrABC system protein C (640 aa).

Residues 22–101 (NDPGCYLMKD…IKSHQPYFNV (80 aa)) enclose the GIY-YIG domain. Residues 211-246 (DELRILLEKQMISFSESLKFEEAGSVRDQLKGIDRL) enclose the UVR domain.

This sequence belongs to the UvrC family. In terms of assembly, interacts with UvrB in an incision complex.

Its subcellular location is the cytoplasm. Functionally, the UvrABC repair system catalyzes the recognition and processing of DNA lesions. UvrC both incises the 5' and 3' sides of the lesion. The N-terminal half is responsible for the 3' incision and the C-terminal half is responsible for the 5' incision. The protein is UvrABC system protein C of Prochlorococcus marinus (strain NATL2A).